A 263-amino-acid polypeptide reads, in one-letter code: Purine nucleoside phosphorylase SAR1163 (263 aa).

Zn(2+) contacts are provided by H79, C124, and H141.

The protein belongs to the purine nucleoside phosphorylase YfiH/LACC1 family. In terms of assembly, homodimer. Cu(2+) serves as cofactor. Zn(2+) is required as a cofactor.

It catalyses the reaction adenosine + phosphate = alpha-D-ribose 1-phosphate + adenine. The enzyme catalyses S-methyl-5'-thioadenosine + phosphate = 5-(methylsulfanyl)-alpha-D-ribose 1-phosphate + adenine. It carries out the reaction inosine + phosphate = alpha-D-ribose 1-phosphate + hypoxanthine. The catalysed reaction is adenosine + H2O + H(+) = inosine + NH4(+). Its function is as follows. Purine nucleoside enzyme that catalyzes the phosphorolysis of adenosine and inosine nucleosides, yielding D-ribose 1-phosphate and the respective free bases, adenine and hypoxanthine. Also catalyzes the phosphorolysis of S-methyl-5'-thioadenosine into adenine and S-methyl-5-thio-alpha-D-ribose 1-phosphate. Also has adenosine deaminase activity. This Staphylococcus aureus (strain MRSA252) protein is Purine nucleoside phosphorylase SAR1163.